Here is a 638-residue protein sequence, read N- to C-terminus: MEKIKVKIKGKEYEVEKGTPLGKIFELAGIKDALGGVINGKIIDLQTPVRESGEIKPVYRGSKESLEIMRHSLAHIMAQALKELYGAKKVHLGVGPTTEEGFYYDVEVEGHKITEEDLPKIEQKMKEIIERDYPILRRELSREEAIKLFDKLKEKYKIDIIKEIPEEEVISVYEQGDFIDLCKGPHLPSTGKAGAFKLTSISGAYWKGRSDQPQLTRIYGIAYWSDKEVKERLKFYEEVKKRDHRRLGKELEFFTIDDNVGAGLILWLPRGAIYRKVLEDYLREEHLKRGYQLVYTPHVGKSKLWETSGHLECYKQNMFPSMKIDEEEYYVKPMNCPFHIAIYKSRTRSYKELPLKLFELGTVYRYELSGVLHGLLRVRGFTQDDAHIVCTPEQVNDVIRETLDFALSTLKDFGFNEFKIYLSTRPEYSIGSDEQWEVSQNALKKAIEDLGYEYEIDEGGGAFYGPKIDVKIRDAIGRMWQLSTIQFDFNLPERFDMTYVGPDNKKHRPYMIHRALLGSIERFTGILLEHYAGLLPIWLSPTQVMIIPIADRHHEYAKKVYEFLKENGIRAEMDLREERMNAKIRDAELKKIPVILVVGDREAQNNTVSVRTKKEGNLGSMELNKFLDWIKEKIKNKE.

Residues 1–59 enclose the TGS domain; that stretch reads MEKIKVKIKGKEYEVEKGTPLGKIFELAGIKDALGGVINGKIIDLQTPVRESGEIKPVY. A catalytic region spans residues 243 to 536; that stretch reads DHRRLGKELE…LLEHYAGLLP (294 aa). Zn(2+) is bound by residues Cys-336, His-387, and His-513.

The protein belongs to the class-II aminoacyl-tRNA synthetase family. Homodimer. Requires Zn(2+) as cofactor.

Its subcellular location is the cytoplasm. It catalyses the reaction tRNA(Thr) + L-threonine + ATP = L-threonyl-tRNA(Thr) + AMP + diphosphate + H(+). Its function is as follows. Catalyzes the attachment of threonine to tRNA(Thr) in a two-step reaction: L-threonine is first activated by ATP to form Thr-AMP and then transferred to the acceptor end of tRNA(Thr). Also edits incorrectly charged L-seryl-tRNA(Thr). The sequence is that of Threonine--tRNA ligase from Aquifex aeolicus (strain VF5).